Here is a 139-residue protein sequence, read N- to C-terminus: Large ribosomal subunit protein uL13 (139 aa).

It belongs to the universal ribosomal protein uL13 family. In terms of assembly, part of the 50S ribosomal subunit.

This protein is one of the early assembly proteins of the 50S ribosomal subunit, although it is not seen to bind rRNA by itself. It is important during the early stages of 50S assembly. The chain is Large ribosomal subunit protein uL13 from Nitratiruptor sp. (strain SB155-2).